A 649-amino-acid polypeptide reads, in one-letter code: Solute carrier family 22 member 17 (649 aa).

The disordered stretch occupies residues 1 to 70 (MAPRVATGTP…GGDGLGSSLS (70 aa)). The span at 24–34 (VEITPTSNGQV) shows a compositional bias: polar residues. The segment covering 47–57 (QGEREREREGE) has biased composition (basic and acidic residues). 2 N-linked (GlcNAc...) asparagine glycosylation sites follow: asparagine 134 and asparagine 143. 11 helical membrane-spanning segments follow: residues 211-231 (VILE…FLGY), 240-260 (GIVL…AAAG), 265-285 (VMAL…GVYL), 300-320 (ALAG…LALV), 330-350 (MITA…FLES), 414-433 (NIWK…HAIR), 448-468 (FYLC…FLGV), 477-497 (GILL…LGLW), 526-546 (FSVL…LLAA), 557-577 (GLGL…AQRL), and 584-604 (FLQH…IMLL).

The protein belongs to the major facilitator (TC 2.A.1) superfamily. Organic cation transporter (TC 2.A.1.19) family. In terms of tissue distribution, expressed in brain.

It is found in the cell membrane. It localises to the vacuole membrane. In terms of biological role, cell surface receptor for LCN2 (24p3) that plays a key role in iron homeostasis and transport. Able to bind iron-bound LCN2 (holo-24p3), followed by internalization of holo-24p3 and release of iron, thereby increasing intracellular iron concentration and leading to inhibition of apoptosis. Also binds iron-free LCN2 (apo-24p3), followed by internalization of apo-24p3 and its association with an intracellular siderophore, leading to iron chelation and iron transfer to the extracellular medium, thereby reducing intracellular iron concentration and resulting in apoptosis. The polypeptide is Solute carrier family 22 member 17 (SLC22A17) (Homo sapiens (Human)).